Here is a 540-residue protein sequence, read N- to C-terminus: Phosphomethylpyrimidine synthase (540 aa).

Substrate is bound by residues Asn-143, Met-172, Tyr-201, His-237, Ser-257 to Gly-259, Asp-298 to Arg-301, and Glu-337. His-341 provides a ligand contact to Zn(2+). Tyr-364 lines the substrate pocket. His-405 provides a ligand contact to Zn(2+). Residues Cys-485, Cys-488, and Cys-493 each contribute to the [4Fe-4S] cluster site.

It belongs to the ThiC family. It depends on [4Fe-4S] cluster as a cofactor.

It carries out the reaction 5-amino-1-(5-phospho-beta-D-ribosyl)imidazole + S-adenosyl-L-methionine = 4-amino-2-methyl-5-(phosphooxymethyl)pyrimidine + CO + 5'-deoxyadenosine + formate + L-methionine + 3 H(+). Its pathway is cofactor biosynthesis; thiamine diphosphate biosynthesis. Catalyzes the synthesis of the hydroxymethylpyrimidine phosphate (HMP-P) moiety of thiamine from aminoimidazole ribotide (AIR) in a radical S-adenosyl-L-methionine (SAM)-dependent reaction. The protein is Phosphomethylpyrimidine synthase of Mycobacterium avium (strain 104).